Reading from the N-terminus, the 166-residue chain is uncharacterized protein (166 aa).

4Fe-4S ferredoxin-type domains are found at residues 3–33 (MKKI…GRIA), 37–67 (KDGK…EHKD), and 68–97 (GYVY…MEDK). The [4Fe-4S] cluster site is built by C13, C16, C19, C23, C46, C49, C54, C58, C77, C80, C83, C87, C101, C104, C111, and C115.

[4Fe-4S] cluster serves as cofactor.

This is an uncharacterized protein from Methanocaldococcus jannaschii (strain ATCC 43067 / DSM 2661 / JAL-1 / JCM 10045 / NBRC 100440) (Methanococcus jannaschii).